The chain runs to 100 residues: Large ribosomal subunit protein bL21 (100 aa).

Belongs to the bacterial ribosomal protein bL21 family. Part of the 50S ribosomal subunit. Contacts protein L20.

Its function is as follows. This protein binds to 23S rRNA in the presence of protein L20. In Mycoplasma genitalium (strain ATCC 33530 / DSM 19775 / NCTC 10195 / G37) (Mycoplasmoides genitalium), this protein is Large ribosomal subunit protein bL21.